Here is a 723-residue protein sequence, read N- to C-terminus: 1,3-alpha-isomaltosidase (723 aa).

Residue Asp451 is the Nucleophile of the active site. Residue Glu454 is part of the active site. The active-site Proton donor is Asp516. His581 provides a ligand contact to substrate.

Belongs to the glycosyl hydrolase 31 family.

It localises to the cytoplasm. It carries out the reaction cyclobis-(1-&gt;3)-alpha-D-isomaltosyl + 2 H2O = 2 isomaltose. In terms of biological role, involved in the intracellular degradation of the cyclic tetrasaccharide cyclobis-(1-6)-alpha-nigerosyl (CNN) formed extracellularly from starch. Catalyzes the hydrolysis of the alpha-1,3-glucosidic linkage of cyclobis-(1-6)-alpha-nigerosyl (CNN) to yield isomaltose via a possible linear tetrasaccharide. It has a strong preference for the alpha-(1-3)-isomaltosyl moiety. The sequence is that of 1,3-alpha-isomaltosidase from Kribbella flavida (strain DSM 17836 / JCM 10339 / NBRC 14399).